The following is a 776-amino-acid chain: Disintegrin and metalloproteinase domain-containing protein 7 (776 aa).

Residues Met1 to Gly23 form the signal peptide. A propeptide spanning residues Val24–Thr176 is cleaved from the precursor. Residues Gly26–Val669 are Extracellular-facing. Asn84, Asn167, and Asn174 each carry an N-linked (GlcNAc...) asparagine glycan. The 196-residue stretch at Lys199 to Pro394 folds into the Peptidase M12B domain. Intrachain disulfides connect Cys310/Cys389, Cys350/Cys373, Cys352/Cys357, and Cys460/Cys480. Residues Phe402–Asn488 form the Disintegrin domain. 3 N-linked (GlcNAc...) asparagine glycosylation sites follow: Asn584, Asn629, and Asn665. A helical membrane pass occupies residues Ala670–Ile690. Residues Arg691–Lys776 lie on the Cytoplasmic side of the membrane. Positions Thr757 to Lys776 are disordered.

Interacts with ITM2B in sperm; the interaction increases following capacitation. Interacts with HSPA5 and CANX.

It localises to the membrane. In terms of biological role, required for normal male fertility via maintenance of epithelial cell morphology in the caput epididymis and subsequently correct epididymis lumen structure required for sperm development. Plays a role in sperm motility, flagella morphology and tyrosine phosphorylation during sperm capacitance. Plays a role in normal expression levels of HSPA5, ITM2B and ADAM2 in sperm both prior to and post-capacitation. This is a non catalytic metalloprotease-like protein. In Macaca fascicularis (Crab-eating macaque), this protein is Disintegrin and metalloproteinase domain-containing protein 7 (ADAM7).